The chain runs to 783 residues: Endonuclease MutS2 (783 aa).

328–335 (GPNTGGKT) contacts ATP. Residues 708–783 (LDLRGKRYEE…GSGCTIATLG (76 aa)) form the Smr domain.

Belongs to the DNA mismatch repair MutS family. MutS2 subfamily. As to quaternary structure, homodimer. Binds to stalled ribosomes, contacting rRNA.

Its function is as follows. Endonuclease that is involved in the suppression of homologous recombination and thus may have a key role in the control of bacterial genetic diversity. Functionally, acts as a ribosome collision sensor, splitting the ribosome into its 2 subunits. Detects stalled/collided 70S ribosomes which it binds and splits by an ATP-hydrolysis driven conformational change. Acts upstream of the ribosome quality control system (RQC), a ribosome-associated complex that mediates the extraction of incompletely synthesized nascent chains from stalled ribosomes and their subsequent degradation. Probably generates substrates for RQC. The protein is Endonuclease MutS2 of Streptococcus thermophilus (strain CNRZ 1066).